We begin with the raw amino-acid sequence, 180 residues long: Large ribosomal subunit protein uL5 (180 aa).

This sequence belongs to the universal ribosomal protein uL5 family. As to quaternary structure, part of the 50S ribosomal subunit; part of the 5S rRNA/L5/L18/L25 subcomplex. Contacts the 5S rRNA and the P site tRNA. Forms a bridge to the 30S subunit in the 70S ribosome.

Functionally, this is one of the proteins that bind and probably mediate the attachment of the 5S RNA into the large ribosomal subunit, where it forms part of the central protuberance. In the 70S ribosome it contacts protein S13 of the 30S subunit (bridge B1b), connecting the 2 subunits; this bridge is implicated in subunit movement. Contacts the P site tRNA; the 5S rRNA and some of its associated proteins might help stabilize positioning of ribosome-bound tRNAs. The chain is Large ribosomal subunit protein uL5 from Streptococcus thermophilus (strain ATCC BAA-491 / LMD-9).